The sequence spans 320 residues: Ferrochelatase (320 aa).

Fe cation-binding residues include H194 and E275.

Belongs to the ferrochelatase family. In terms of assembly, monomer.

The protein resides in the cytoplasm. The catalysed reaction is heme b + 2 H(+) = protoporphyrin IX + Fe(2+). It participates in porphyrin-containing compound metabolism; protoheme biosynthesis; protoheme from protoporphyrin-IX: step 1/1. Its function is as follows. Catalyzes the ferrous insertion into protoporphyrin IX. The sequence is that of Ferrochelatase from Escherichia coli O45:K1 (strain S88 / ExPEC).